The following is a 132-amino-acid chain: Transcription antitermination protein NusB (132 aa).

Belongs to the NusB family.

In terms of biological role, involved in transcription antitermination. Required for transcription of ribosomal RNA (rRNA) genes. Binds specifically to the boxA antiterminator sequence of the ribosomal RNA (rrn) operons. The polypeptide is Transcription antitermination protein NusB (Campylobacter jejuni subsp. jejuni serotype O:6 (strain 81116 / NCTC 11828)).